Reading from the N-terminus, the 285-residue chain is sn-2 palmitoyl-lipid 9-desaturase (285 aa).

2 helical membrane-spanning segments follow: residues 20-40 and 44-64; these read WINV…PWFF and ALGL…CLGY. Residues 65–70 carry the Histidine box-1 motif; the sequence is HRLLSH. A helical transmembrane segment spans residues 81–101; that stretch reads YAIALIGALALQGGPIFWVGG. A Histidine box-2 motif is present at residues 102-106; sequence HRQHH. The helical transmembrane segment at 169 to 189 threads the bilayer; it reads IPFALLLYVLGGWPFVFYGVF. The short motif at 239–243 is the Histidine box-3 element; that stretch reads HHTYP.

It belongs to the fatty acid desaturase type 2 family. Fe(2+) serves as cofactor.

The protein localises to the membrane. The enzyme catalyses a 1-acyl-2-hexadecanoyl-glycerolipid + 2 reduced [2Fe-2S]-[ferredoxin] + O2 + 2 H(+) = a 1-acyl-2-[(9Z)-hexadecenoyl]-glycerolipid + 2 oxidized [2Fe-2S]-[ferredoxin] + 2 H2O. The protein operates within lipid metabolism; fatty acid biosynthesis. Its function is as follows. Desaturase involved in fatty acid biosynthesis. Introduces a double bond at carbon 9 of palmitoyl groups (16:0) attached to the sn-2 position of the glycerol moiety of membrane glycerolipids. This Nostoc sp. (strain 36) protein is sn-2 palmitoyl-lipid 9-desaturase.